The sequence spans 632 residues: MAU2 chromatid cohesion factor homolog (632 aa).

TPR repeat units lie at residues 453 to 486 and 493 to 526; these read GGFY…ANAE and SCSL…ASKI.

It belongs to the SCC4/mau-2 family. Interacts with Nipped-B to form the cohesin loading complex.

It is found in the nucleus. Its subcellular location is the nucleoplasm. Required for association of the cohesin complex with chromatin during interphase. Plays a role in sister chromatid cohesion and normal progression through prometaphase. This is MAU2 chromatid cohesion factor homolog from Drosophila erecta (Fruit fly).